A 621-amino-acid polypeptide reads, in one-letter code: Chaperone protein HtpG (621 aa).

Residues 1 to 341 (MSNQEYTFQT…SEDLPLNVSR (341 aa)) are a; substrate-binding. A b region spans residues 342-547 (EILQQNKILA…GDEQNAMMAN (206 aa)). The segment at 548-621 (FMRQMGQSVP…RLNSVLLKAL (74 aa)) is c.

This sequence belongs to the heat shock protein 90 family. As to quaternary structure, homodimer.

The protein resides in the cytoplasm. Its function is as follows. Molecular chaperone. Has ATPase activity. The polypeptide is Chaperone protein HtpG (Helicobacter pylori (strain HPAG1)).